We begin with the raw amino-acid sequence, 720 residues long: Methionine--tRNA ligase (720 aa).

A 'HIGH' region motif is present at residues 27–37; the sequence is PYANGQIHIGH. 4 residues coordinate Zn(2+): C158, C161, C171, and C174. Positions 348–352 match the 'KMSKS' region motif; the sequence is KMSKS. K351 serves as a coordination point for ATP. The tRNA-binding domain maps to 614–720; the sequence is DFAKIDLRIA…SGAKPGMRVK (107 aa).

This sequence belongs to the class-I aminoacyl-tRNA synthetase family. MetG type 1 subfamily. As to quaternary structure, homodimer. It depends on Zn(2+) as a cofactor.

The protein resides in the cytoplasm. It carries out the reaction tRNA(Met) + L-methionine + ATP = L-methionyl-tRNA(Met) + AMP + diphosphate. In terms of biological role, is required not only for elongation of protein synthesis but also for the initiation of all mRNA translation through initiator tRNA(fMet) aminoacylation. This Burkholderia lata (strain ATCC 17760 / DSM 23089 / LMG 22485 / NCIMB 9086 / R18194 / 383) protein is Methionine--tRNA ligase.